A 73-amino-acid chain; its full sequence is Translation initiation factor IF-1 (73 aa).

The S1-like domain maps to 1–73 (MSEKEAGIEV…TRGRITYRDK (73 aa)).

It belongs to the IF-1 family. Component of the 30S ribosomal translation pre-initiation complex which assembles on the 30S ribosome in the order IF-2 and IF-3, IF-1 and N-formylmethionyl-tRNA(fMet); mRNA recruitment can occur at any time during PIC assembly.

The protein localises to the cytoplasm. Functionally, one of the essential components for the initiation of protein synthesis. Stabilizes the binding of IF-2 and IF-3 on the 30S subunit to which N-formylmethionyl-tRNA(fMet) subsequently binds. Helps modulate mRNA selection, yielding the 30S pre-initiation complex (PIC). Upon addition of the 50S ribosomal subunit IF-1, IF-2 and IF-3 are released leaving the mature 70S translation initiation complex. This is Translation initiation factor IF-1 from Anaeromyxobacter sp. (strain Fw109-5).